The primary structure comprises 91 residues: MARVTVQDAVEKIGNRFDLVLVAARRARQIQVGGKDPLVAEENDKYTVIALREIEEGLITSQILDLRDRQEQQEQEAAEIQAVTAIAEGRR.

Belongs to the RNA polymerase subunit omega family. The RNAP catalytic core consists of 2 alpha, 1 beta, 1 beta' and 1 omega subunit. When a sigma factor is associated with the core the holoenzyme is formed, which can initiate transcription.

It catalyses the reaction RNA(n) + a ribonucleoside 5'-triphosphate = RNA(n+1) + diphosphate. In terms of biological role, promotes RNA polymerase assembly. Latches the N- and C-terminal regions of the beta' subunit thereby facilitating its interaction with the beta and alpha subunits. The protein is DNA-directed RNA polymerase subunit omega of Sodalis glossinidius (strain morsitans).